Reading from the N-terminus, the 164-residue chain is Protein-export protein SecB (164 aa).

This sequence belongs to the SecB family. As to quaternary structure, homotetramer, a dimer of dimers. One homotetramer interacts with 1 SecA dimer.

The protein resides in the cytoplasm. In terms of biological role, one of the proteins required for the normal export of preproteins out of the cell cytoplasm. It is a molecular chaperone that binds to a subset of precursor proteins, maintaining them in a translocation-competent state. It also specifically binds to its receptor SecA. The chain is Protein-export protein SecB from Caulobacter sp. (strain K31).